A 193-amino-acid polypeptide reads, in one-letter code: Molybdenum cofactor guanylyltransferase (193 aa).

Residues 8 to 10 (LAG), Lys-21, Asp-67, and Asp-98 each bind GTP. Asp-98 is a Mg(2+) binding site.

It belongs to the MobA family. As to quaternary structure, monomer. Mg(2+) serves as cofactor.

The protein localises to the cytoplasm. It catalyses the reaction Mo-molybdopterin + GTP + H(+) = Mo-molybdopterin guanine dinucleotide + diphosphate. Its function is as follows. Transfers a GMP moiety from GTP to Mo-molybdopterin (Mo-MPT) cofactor (Moco or molybdenum cofactor) to form Mo-molybdopterin guanine dinucleotide (Mo-MGD) cofactor. This is Molybdenum cofactor guanylyltransferase from Cereibacter sphaeroides (strain ATCC 17023 / DSM 158 / JCM 6121 / CCUG 31486 / LMG 2827 / NBRC 12203 / NCIMB 8253 / ATH 2.4.1.) (Rhodobacter sphaeroides).